The chain runs to 832 residues: MVEKTDIRVVRCGGSKINFRPPIISHDSRFVLCVSGDSVKVYSTRTEEWLHNLQGHNNQVTGIAFNPANQLQVYSCSADGTVKLWDFIDGILIKTFVIGYPLYSLYVSEKHEGVIFLIVSMVTDSNNESFQLVAVHLPKSAEQEVEAKELSTVASKISPNPSCTAFGRGGEFIAFSRHLQLNVYFFRKQKTYSFSLKATDKKAGKNAFTCVACHPTDDCIASGHEDGKIRLWRNFNHKKEYTYSTKHWHHDAVNHLCFTPEGSNLLSGGIESVLVQWQYGDMSKKEFLPRLGGSISHVSASADGQLFCTAHSDNKISIIESSFKVSGLIQGLVRGDAVSTDLMIDPRSKALVLNGKPGHLQFYSLLRDKHLYNLDIVQQEYIYEAGLDQFEVVKAVFDVKGSWLATVEERGHKTSDLEFFLKLWAFDETTQSFVLNTTVTEAHSERITSMCFSSSEETTMLVTTALDGQFKAWCQTADAQQAQNYWSCDFVGSYHNLKPKNCCFSADGSILAVSFQEVLTLWSPETWELLTTLCQPPGEIRDLCFGRLSCSKYLLSTTTKNLLCCWNLLTCALEWSTSVDVSRLQSDPLSENVAAFSFESKHTHLFVFKPSEPRPLFSQRYVCLERVDRAVFVPREEPFNSCDESCQWLNRSQLYFLTHNMDLLTFSSATEEDRMLSSSKRLVIDESVAVTPFYLLLGRHRKQQHKLNTETQEPADKPQHTQGSVTIKQLLHTPAHVLPAASVLCSMFVRSLLISNTGVREEMDSSEQEMDSEKEEEESEEEMEACDGQQELRAQGSVDEQKPKLSKAQERELKSLRKTDFSWMTSLIDSKP.

13 WD repeats span residues Lys4 to Ser43, Glu47 to Asp86, Gly90 to Ala134, Lys148 to Arg187, Leu196 to Arg233, Lys239 to Gln278, Asp281 to Glu320, Ser326 to Ser364, Gln378 to Ala425, Ser432 to Cys474, Tyr485 to Ser523, Trp527 to Asn567, and Ala572 to Lys609. Disordered stretches follow at residues Gln704–Gly723 and Val759–Arg811. Positions Asp764–Ala785 are enriched in acidic residues. Residues Asp799–Arg811 show a composition bias toward basic and acidic residues.

As to quaternary structure, component of the proposed t-UTP subcomplex of the ribosomal small subunit (SSU) processome. SSU processome is composed of more than 70 proteins and the RNA chaperone small nucleolar RNA (snoRNA) U3.

Its subcellular location is the nucleus. It is found in the nucleolus. Ribosome biogenesis factor. Part of the small subunit (SSU) processome, first precursor of the small eukaryotic ribosomal subunit. During the assembly of the SSU processome in the nucleolus, many ribosome biogenesis factors, an RNA chaperone and ribosomal proteins associate with the nascent pre-rRNA and work in concert to generate RNA folding, modifications, rearrangements and cleavage as well as targeted degradation of pre-ribosomal RNA by the RNA exosome. Involved in nucleolar processing of pre-18S ribosomal RNA. Required for optimal pre-ribosomal RNA transcription by RNA polymerase I. This chain is WD repeat-containing protein 75 (wdr75), found in Danio rerio (Zebrafish).